The sequence spans 300 residues: 4-hydroxy-tetrahydrodipicolinate synthase (300 aa).

Thr49 is a pyruvate binding site. The Proton donor/acceptor role is filled by Tyr137. The active-site Schiff-base intermediate with substrate is Lys165. A pyruvate-binding site is contributed by Ile207.

It belongs to the DapA family. Homotetramer; dimer of dimers.

It localises to the cytoplasm. The catalysed reaction is L-aspartate 4-semialdehyde + pyruvate = (2S,4S)-4-hydroxy-2,3,4,5-tetrahydrodipicolinate + H2O + H(+). It participates in amino-acid biosynthesis; L-lysine biosynthesis via DAP pathway; (S)-tetrahydrodipicolinate from L-aspartate: step 3/4. Its function is as follows. Catalyzes the condensation of (S)-aspartate-beta-semialdehyde [(S)-ASA] and pyruvate to 4-hydroxy-tetrahydrodipicolinate (HTPA). In Nitrosospira multiformis (strain ATCC 25196 / NCIMB 11849 / C 71), this protein is 4-hydroxy-tetrahydrodipicolinate synthase.